The sequence spans 171 residues: 3-hydroxydecanoyl-[acyl-carrier-protein] dehydratase (171 aa).

His-70 is a catalytic residue.

Belongs to the thioester dehydratase family. FabA subfamily. Homodimer.

The protein localises to the cytoplasm. It carries out the reaction a (3R)-hydroxyacyl-[ACP] = a (2E)-enoyl-[ACP] + H2O. The catalysed reaction is (3R)-hydroxydecanoyl-[ACP] = (2E)-decenoyl-[ACP] + H2O. The enzyme catalyses (2E)-decenoyl-[ACP] = (3Z)-decenoyl-[ACP]. It functions in the pathway lipid metabolism; fatty acid biosynthesis. Necessary for the introduction of cis unsaturation into fatty acids. Catalyzes the dehydration of (3R)-3-hydroxydecanoyl-ACP to E-(2)-decenoyl-ACP and then its isomerization to Z-(3)-decenoyl-ACP. Can catalyze the dehydratase reaction for beta-hydroxyacyl-ACPs with saturated chain lengths up to 16:0, being most active on intermediate chain length. The sequence is that of 3-hydroxydecanoyl-[acyl-carrier-protein] dehydratase from Shewanella pealeana (strain ATCC 700345 / ANG-SQ1).